The sequence spans 168 residues: Skp-like protein (168 aa).

An N-terminal signal peptide occupies residues 1-22 (MRKFTQFVLITAAIMAAPSAFA).

The protein belongs to the Skp family.

This chain is Skp-like protein, found in Pseudomonas aeruginosa (strain ATCC 15692 / DSM 22644 / CIP 104116 / JCM 14847 / LMG 12228 / 1C / PRS 101 / PAO1).